We begin with the raw amino-acid sequence, 276 residues long: Large ribosomal subunit protein uL2 (276 aa).

Disordered stretches follow at residues 1–60 and 226–276; these read MSIK…RHKR and NAVD…KRNQ. Residues 20–31 are compositionally biased toward basic and acidic residues; that stretch reads SKEEITREEPEK. Basic residues-rich tracts occupy residues 50 to 60 and 258 to 276; these read STRRQGGRHKR and KTRRKAKKSDKYIVKKRNQ.

This sequence belongs to the universal ribosomal protein uL2 family. In terms of assembly, part of the 50S ribosomal subunit. Forms a bridge to the 30S subunit in the 70S ribosome.

One of the primary rRNA binding proteins. Required for association of the 30S and 50S subunits to form the 70S ribosome, for tRNA binding and peptide bond formation. It has been suggested to have peptidyltransferase activity; this is somewhat controversial. Makes several contacts with the 16S rRNA in the 70S ribosome. This is Large ribosomal subunit protein uL2 from Natranaerobius thermophilus (strain ATCC BAA-1301 / DSM 18059 / JW/NM-WN-LF).